The sequence spans 525 residues: GMP synthase [glutamine-hydrolyzing] (525 aa).

The region spanning 9–207 is the Glutamine amidotransferase type-1 domain; that stretch reads RILILDFGSQ…VQDICGCEAL (199 aa). C86 functions as the Nucleophile in the catalytic mechanism. Active-site residues include H181 and E183. The GMPS ATP-PPase domain maps to 208–400; sequence WTASNIVEDA…LGLPYDMVYR (193 aa). An ATP-binding site is contributed by 235 to 241; sequence SGGVDSS.

As to quaternary structure, homodimer.

The enzyme catalyses XMP + L-glutamine + ATP + H2O = GMP + L-glutamate + AMP + diphosphate + 2 H(+). Its pathway is purine metabolism; GMP biosynthesis; GMP from XMP (L-Gln route): step 1/1. Its function is as follows. Catalyzes the synthesis of GMP from XMP. In Pseudomonas putida (strain GB-1), this protein is GMP synthase [glutamine-hydrolyzing].